The sequence spans 106 residues: uncharacterized protein (106 aa).

It localises to the mitochondrion. This is an uncharacterized protein from Arabidopsis thaliana (Mouse-ear cress).